A 78-amino-acid polypeptide reads, in one-letter code: Small ribosomal subunit protein uS17 (78 aa).

It belongs to the universal ribosomal protein uS17 family. As to quaternary structure, part of the 30S ribosomal subunit.

One of the primary rRNA binding proteins, it binds specifically to the 5'-end of 16S ribosomal RNA. The protein is Small ribosomal subunit protein uS17 of Pelagibacter ubique (strain HTCC1062).